We begin with the raw amino-acid sequence, 38 residues long: Large ribosomal subunit protein bL36 (38 aa).

The protein belongs to the bacterial ribosomal protein bL36 family.

This is Large ribosomal subunit protein bL36 from Chloroherpeton thalassium (strain ATCC 35110 / GB-78).